Here is a 184-residue protein sequence, read N- to C-terminus: UPF0340 protein TTE0860 (184 aa).

Belongs to the UPF0340 family.

This Caldanaerobacter subterraneus subsp. tengcongensis (strain DSM 15242 / JCM 11007 / NBRC 100824 / MB4) (Thermoanaerobacter tengcongensis) protein is UPF0340 protein TTE0860.